The sequence spans 291 residues: Venom metalloproteinase inhibitor DM43 (291 aa).

Ig-like V-type domains lie at 22–79 (TNVT…ILTS) and 114–171 (GLET…PASA). Asparagine 23 carries an N-linked (GlcNAc...) asparagine glycan. Intrachain disulfides connect cysteine 28-cysteine 74 and cysteine 121-cysteine 163. Residues asparagine 156, asparagine 160, and asparagine 175 are each glycosylated (N-linked (GlcNAc...) asparagine). In terms of domain architecture, Ig-like V-type 3 spans 191–288 (PKANFYILND…DSNVLELDLS (98 aa)). Residues cysteine 213 and cysteine 265 are joined by a disulfide bond.

As to quaternary structure, homodimer. In terms of processing, N-glycosylated. As to expression, blood and milk.

Functionally, metalloproteinase inhibitor. This Didelphis marsupialis (Southern opossum) protein is Venom metalloproteinase inhibitor DM43.